Here is a 342-residue protein sequence, read N- to C-terminus: Holliday junction branch migration complex subunit RuvB (342 aa).

A large ATPase domain (RuvB-L) region spans residues 1-179 (MTNILSPEKS…FGIPMRLNFY (179 aa)). ATP is bound by residues Ile-18, Arg-19, Gly-60, Lys-63, Thr-64, Thr-65, 126–128 (EDF), Arg-169, Tyr-179, and Arg-216. Thr-64 contacts Mg(2+). Positions 180–250 (NTEELKKVLN…ISDFGLNRLE (71 aa)) are small ATPAse domain (RuvB-S). A head domain (RuvB-H) region spans residues 253–342 (CIGLDSNDYR…HQFNIFNENE (90 aa)). DNA is bound by residues Arg-289, Arg-308, and Arg-313.

This sequence belongs to the RuvB family. Homohexamer. Forms an RuvA(8)-RuvB(12)-Holliday junction (HJ) complex. HJ DNA is sandwiched between 2 RuvA tetramers; dsDNA enters through RuvA and exits via RuvB. An RuvB hexamer assembles on each DNA strand where it exits the tetramer. Each RuvB hexamer is contacted by two RuvA subunits (via domain III) on 2 adjacent RuvB subunits; this complex drives branch migration. In the full resolvosome a probable DNA-RuvA(4)-RuvB(12)-RuvC(2) complex forms which resolves the HJ.

The protein localises to the cytoplasm. It carries out the reaction ATP + H2O = ADP + phosphate + H(+). In terms of biological role, the RuvA-RuvB-RuvC complex processes Holliday junction (HJ) DNA during genetic recombination and DNA repair, while the RuvA-RuvB complex plays an important role in the rescue of blocked DNA replication forks via replication fork reversal (RFR). RuvA specifically binds to HJ cruciform DNA, conferring on it an open structure. The RuvB hexamer acts as an ATP-dependent pump, pulling dsDNA into and through the RuvAB complex. RuvB forms 2 homohexamers on either side of HJ DNA bound by 1 or 2 RuvA tetramers; 4 subunits per hexamer contact DNA at a time. Coordinated motions by a converter formed by DNA-disengaged RuvB subunits stimulates ATP hydrolysis and nucleotide exchange. Immobilization of the converter enables RuvB to convert the ATP-contained energy into a lever motion, pulling 2 nucleotides of DNA out of the RuvA tetramer per ATP hydrolyzed, thus driving DNA branch migration. The RuvB motors rotate together with the DNA substrate, which together with the progressing nucleotide cycle form the mechanistic basis for DNA recombination by continuous HJ branch migration. Branch migration allows RuvC to scan DNA until it finds its consensus sequence, where it cleaves and resolves cruciform DNA. This is Holliday junction branch migration complex subunit RuvB from Rickettsia africae (strain ESF-5).